The chain runs to 482 residues: Glucose starvation modulator protein 1 (482 aa).

Positions 20 to 48 form a DNA-binding region, zn(2)-C6 fungal-type; the sequence is CVFCHEKHLQCDVGRPCQNCEKRNIGESC. One can recognise a PAS domain in the interval 350–422; that stretch reads LLEYENMSKM…KLFNEYLAFS (73 aa).

This sequence belongs to the ERT1/acuK family.

Its subcellular location is the nucleus. In terms of biological role, transcription factor which regulates nonfermentable carbon utilization. The protein is Glucose starvation modulator protein 1 (GSM1) of Eremothecium gossypii (strain ATCC 10895 / CBS 109.51 / FGSC 9923 / NRRL Y-1056) (Yeast).